We begin with the raw amino-acid sequence, 284 residues long: RNase adapter protein RapZ (284 aa).

8-15 (GRSGSGKS) is an ATP binding site. Residue 56-59 (DVRN) coordinates GTP. Positions 266–284 (RSRGKNVQLRHRTLEKRKE) are RNA-binding.

This sequence belongs to the RapZ-like family. RapZ subfamily. Homotrimer.

Functionally, modulates the synthesis of GlmS, by affecting the processing and stability of the regulatory small RNA GlmZ. When glucosamine-6-phosphate (GlcN6P) concentrations are high in the cell, RapZ binds GlmZ and targets it to cleavage by RNase E. Consequently, GlmZ is inactivated and unable to activate GlmS synthesis. Under low GlcN6P concentrations, RapZ is sequestered and inactivated by an other regulatory small RNA, GlmY, preventing GlmZ degradation and leading to synthesis of GlmS. This Hamiltonella defensa subsp. Acyrthosiphon pisum (strain 5AT) protein is RNase adapter protein RapZ.